The primary structure comprises 327 residues: Serine/threonine-protein phosphatase PP1-1 (327 aa).

Residues Asp-63, His-65, Asp-91, and Asn-123 each coordinate Mn(2+). The Proton donor role is filled by His-124. 2 residues coordinate Mn(2+): His-172 and His-247. The disordered stretch occupies residues 305 to 327 (GYQGSSQNWHMTPPRKNKTGNSK). Phosphothreonine; by CDC2 is present on Thr-316. The segment covering 317–327 (PPRKNKTGNSK) has biased composition (basic residues).

It belongs to the PPP phosphatase family. PP-1 subfamily. As to quaternary structure, oligomer. Requires Mn(2+) as cofactor.

The protein resides in the nucleus. It carries out the reaction O-phospho-L-seryl-[protein] + H2O = L-seryl-[protein] + phosphate. The catalysed reaction is O-phospho-L-threonyl-[protein] + H2O = L-threonyl-[protein] + phosphate. In terms of biological role, essential role in cell cycle control. PP1 is perhaps required for exit from mitosis. In Schizosaccharomyces pombe (strain 972 / ATCC 24843) (Fission yeast), this protein is Serine/threonine-protein phosphatase PP1-1 (dis2).